Here is a 557-residue protein sequence, read N- to C-terminus: Ribonuclease J 2 (557 aa).

Zn(2+)-binding residues include His76, His78, His144, and Glu166. Position 366 to 370 (366 to 370 (HASSH)) interacts with substrate.

This sequence belongs to the metallo-beta-lactamase superfamily. RNA-metabolizing metallo-beta-lactamase-like family. Bacterial RNase J subfamily. In terms of assembly, homodimer. Component of a possible RNA degradosome complex composed of cshA, eno, pfkA, pnp, rnjA, rnjB, rnpA and rny. Interacts specifically with RNase J1. It depends on Zn(2+) as a cofactor.

The protein localises to the cytoplasm. Functionally, an RNase that has 5'-3' exonuclease and endonuclease activity, with the exonuclease activity probably being most important in vivo. Involved in maturation of 16S rRNA, rnpB (the RNA component of RNase P) maturation and degradation, and mRNA maturation and/or decay. This subunit probably plays a structural rather than enzymatic role as mutation of its putative active site gives no phenotype, and its deletion is partially complemented by inactive RNase J1. The polypeptide is Ribonuclease J 2 (Staphylococcus aureus (strain NCTC 8325 / PS 47)).